A 104-amino-acid polypeptide reads, in one-letter code: Large ribosomal subunit protein uL24 (104 aa).

Belongs to the universal ribosomal protein uL24 family. In terms of assembly, part of the 50S ribosomal subunit.

Its function is as follows. One of two assembly initiator proteins, it binds directly to the 5'-end of the 23S rRNA, where it nucleates assembly of the 50S subunit. In terms of biological role, one of the proteins that surrounds the polypeptide exit tunnel on the outside of the subunit. This chain is Large ribosomal subunit protein uL24, found in Shewanella sp. (strain W3-18-1).